The chain runs to 428 residues: Protein Wnt-8b (428 aa).

An N-terminal signal peptide occupies residues 1–22 (MFYTGSFWFIFFILPAIPFCHS). An intrachain disulfide couples C54 to C65. 2 N-linked (GlcNAc...) asparagine glycosylation sites follow: N123 and N176. 10 cysteine pairs are disulfide-bonded: C177–C185, C187–C205, C253–C267, C255–C262, C329–C367, C345–C360, C364–C406, C382–C397, C384–C394, and C389–C390. Residue S259 is the site of O-palmitoleoyl serine attachment. N-linked (GlcNAc...) asparagine glycosylation is present at N332.

It belongs to the Wnt family. Post-translationally, palmitoleoylation is required for efficient binding to frizzled receptors. Depalmitoleoylation leads to Wnt signaling pathway inhibition. Proteolytic processing by tiki1 and tiki2 promotes oxidation and formation of large disulfide-bond oligomers, leading to inactivation of wnt8b. In terms of tissue distribution, in adults, in brain.

It is found in the secreted. The protein resides in the extracellular space. Its subcellular location is the extracellular matrix. In terms of biological role, ligand for members of the frizzled family of seven transmembrane receptors. Plays a role in the initiation of dorsal axis development. May activate a Nieuwkoop center-like signaling pathway. This Xenopus laevis (African clawed frog) protein is Protein Wnt-8b (wnt8b).